The chain runs to 274 residues: 4-deoxy-L-threo-5-hexosulose-uronate ketol-isomerase (274 aa).

Positions 192, 194, 199, and 241 each coordinate Zn(2+).

The protein belongs to the KduI family. The cofactor is Zn(2+).

It catalyses the reaction 5-dehydro-4-deoxy-D-glucuronate = 3-deoxy-D-glycero-2,5-hexodiulosonate. It functions in the pathway glycan metabolism; pectin degradation; 2-dehydro-3-deoxy-D-gluconate from pectin: step 4/5. In terms of biological role, catalyzes the isomerization of 5-dehydro-4-deoxy-D-glucuronate to 3-deoxy-D-glycero-2,5-hexodiulosonate. This is 4-deoxy-L-threo-5-hexosulose-uronate ketol-isomerase from Shigella boydii serotype 18 (strain CDC 3083-94 / BS512).